We begin with the raw amino-acid sequence, 298 residues long: Protoheme IX farnesyltransferase 1 (298 aa).

The next 9 helical transmembrane spans lie at 21–41 (QVWW…INSF), 43–63 (SYLI…SMGA), 94–114 (KGAF…LLIF), 118–138 (LAAL…SYLL), 144–164 (YSII…WYTV), 168–188 (FSWI…VHVW), 215–235 (TAVS…IPYF), 236–256 (LGFF…PIVI), and 274–294 (FIYT…IHII).

This sequence belongs to the UbiA prenyltransferase family. Protoheme IX farnesyltransferase subfamily.

It is found in the cell membrane. It catalyses the reaction heme b + (2E,6E)-farnesyl diphosphate + H2O = Fe(II)-heme o + diphosphate. It functions in the pathway porphyrin-containing compound metabolism; heme O biosynthesis; heme O from protoheme: step 1/1. Its function is as follows. Converts heme B (protoheme IX) to heme O by substitution of the vinyl group on carbon 2 of heme B porphyrin ring with a hydroxyethyl farnesyl side group. This Picrophilus torridus (strain ATCC 700027 / DSM 9790 / JCM 10055 / NBRC 100828 / KAW 2/3) protein is Protoheme IX farnesyltransferase 1.